The following is a 598-amino-acid chain: Pentatricopeptide repeat-containing protein At5g14820, mitochondrial (598 aa).

The N-terminal 98 residues, 1-98 (MAAAPWLYLS…RGFSSGSSNV (98 aa)), are a transit peptide targeting the mitochondrion. PPR repeat units lie at residues 193–227 (DSRTYNSMMSILAKTRQFETMVSVLEEMGTKGLLT), 229–261 (ETFTIAMKAFAAAKERKKAVGIFELMKKYKFKI), 262–292 (GVETINCLLDSLGRAKLGKEAQVLFDKLKER), 296–330 (NMMTYTVLLNGWCRVRNLIEAARIWNDMIDHGLKP), 331–365 (DIVAHNVMLEGLLRSMKKSDAIKLFHVMKSKGPCP), 366–400 (NVRSYTIMIRDFCKQSSMETAIEYFDDMVDSGLQP), 401–435 (DAAVYTCLITGFGTQKKLDTVYELLKEMQEKGHPP), 436–470 (DGKTYNALIKLMANQKMPEHGTRIYNKMIQNEIEP), 471–505 (SIHTFNMIMKSYFVARNYEMGRAVWDEMIKKGICP), and 506–540 (DDNSYTVLIRGLISEGKSREACRYLEEMLDKGMKT).

The protein belongs to the PPR family. P subfamily.

It localises to the mitochondrion. In Arabidopsis thaliana (Mouse-ear cress), this protein is Pentatricopeptide repeat-containing protein At5g14820, mitochondrial.